The primary structure comprises 314 residues: Malate dehydrogenase (314 aa).

NAD(+) is bound by residues 11 to 16 (GSGNIG) and Asp-35. Arg-84 and Arg-90 together coordinate substrate. NAD(+) is bound by residues Asn-97 and 120 to 122 (ITN). Substrate-binding residues include Asn-122 and Arg-153. Residue His-177 is the Proton acceptor of the active site.

The protein belongs to the LDH/MDH superfamily. MDH type 3 family.

The catalysed reaction is (S)-malate + NAD(+) = oxaloacetate + NADH + H(+). In terms of biological role, catalyzes the reversible oxidation of malate to oxaloacetate. This chain is Malate dehydrogenase, found in Rickettsia felis (strain ATCC VR-1525 / URRWXCal2) (Rickettsia azadi).